A 130-amino-acid chain; its full sequence is Small ribosomal subunit protein uS9 (130 aa).

Residues 104-130 (LTRDPRMKERRKYGLKKARKAPQFSKR) are disordered. Over residues 111-130 (KERRKYGLKKARKAPQFSKR) the composition is skewed to basic residues.

The protein belongs to the universal ribosomal protein uS9 family.

The polypeptide is Small ribosomal subunit protein uS9 (Moorella thermoacetica (strain ATCC 39073 / JCM 9320)).